Reading from the N-terminus, the 56-residue chain is Small ribosomal subunit protein uS14B (56 aa).

Zn(2+) contacts are provided by cysteine 21 and cysteine 24. Serine 25 bears the Phosphoserine mark. Positions 39 and 42 each coordinate Zn(2+).

Belongs to the universal ribosomal protein uS14 family. In terms of assembly, component of the small ribosomal subunit (SSU). Mature yeast ribosomes consist of a small (40S) and a large (60S) subunit. The 40S small subunit contains 1 molecule of ribosomal RNA (18S rRNA) and 33 different proteins (encoded by 57 genes). The large 60S subunit contains 3 rRNA molecules (25S, 5.8S and 5S rRNA) and 46 different proteins (encoded by 81 genes). The cofactor is Zn(2+).

It localises to the cytoplasm. Functionally, component of the ribosome, a large ribonucleoprotein complex responsible for the synthesis of proteins in the cell. The small ribosomal subunit (SSU) binds messenger RNAs (mRNAs) and translates the encoded message by selecting cognate aminoacyl-transfer RNA (tRNA) molecules. The large subunit (LSU) contains the ribosomal catalytic site termed the peptidyl transferase center (PTC), which catalyzes the formation of peptide bonds, thereby polymerizing the amino acids delivered by tRNAs into a polypeptide chain. The nascent polypeptides leave the ribosome through a tunnel in the LSU and interact with protein factors that function in enzymatic processing, targeting, and the membrane insertion of nascent chains at the exit of the ribosomal tunnel. The sequence is that of Small ribosomal subunit protein uS14B from Saccharomyces cerevisiae (strain ATCC 204508 / S288c) (Baker's yeast).